We begin with the raw amino-acid sequence, 306 residues long: Acetyl-coenzyme A carboxylase carboxyl transferase subunit beta (306 aa).

The CoA carboxyltransferase N-terminal domain maps to 25–294 (LWIKDPTSGE…VVTPSPPSPT (270 aa)). The segment at 284 to 306 (AVVTPSPPSPTDSQTSLSKTKAA) is disordered.

This sequence belongs to the AccD/PCCB family. In terms of assembly, acetyl-CoA carboxylase is a heterohexamer composed of biotin carboxyl carrier protein (AccB), biotin carboxylase (AccC) and two subunits each of ACCase subunit alpha (AccA) and ACCase subunit beta (AccD).

The protein localises to the cytoplasm. The enzyme catalyses N(6)-carboxybiotinyl-L-lysyl-[protein] + acetyl-CoA = N(6)-biotinyl-L-lysyl-[protein] + malonyl-CoA. It participates in lipid metabolism; malonyl-CoA biosynthesis; malonyl-CoA from acetyl-CoA: step 1/1. Its function is as follows. Component of the acetyl coenzyme A carboxylase (ACC) complex. Biotin carboxylase (BC) catalyzes the carboxylation of biotin on its carrier protein (BCCP) and then the CO(2) group is transferred by the transcarboxylase to acetyl-CoA to form malonyl-CoA. In Bartonella tribocorum (strain CIP 105476 / IBS 506), this protein is Acetyl-coenzyme A carboxylase carboxyl transferase subunit beta.